We begin with the raw amino-acid sequence, 294 residues long: Diaminopimelate epimerase (294 aa).

Substrate contacts are provided by Asn-15, Gln-47, and Asn-67. Cys-76 (proton donor) is an active-site residue. Substrate contacts are provided by residues 77-78 (GN), Asn-163, Asn-197, and 215-216 (ER). Cys-224 functions as the Proton acceptor in the catalytic mechanism. Residue 225 to 226 (GS) coordinates substrate.

It belongs to the diaminopimelate epimerase family. Homodimer.

It localises to the cytoplasm. The catalysed reaction is (2S,6S)-2,6-diaminopimelate = meso-2,6-diaminopimelate. Its pathway is amino-acid biosynthesis; L-lysine biosynthesis via DAP pathway; DL-2,6-diaminopimelate from LL-2,6-diaminopimelate: step 1/1. In terms of biological role, catalyzes the stereoinversion of LL-2,6-diaminopimelate (L,L-DAP) to meso-diaminopimelate (meso-DAP), a precursor of L-lysine and an essential component of the bacterial peptidoglycan. The protein is Diaminopimelate epimerase of Mesorhizobium japonicum (strain LMG 29417 / CECT 9101 / MAFF 303099) (Mesorhizobium loti (strain MAFF 303099)).